Reading from the N-terminus, the 320-residue chain is Cytochrome f (320 aa).

Positions 1–35 (MQNRNTFSWIKEQMTRSISVSIMIYVITRTAISNA) are cleaved as a signal peptide. Heme contacts are provided by Y36, C56, C59, and H60. Residues 286-306 (VQGLLFFLASVILAQIFLVLK) traverse the membrane as a helical segment.

The protein belongs to the cytochrome f family. In terms of assembly, the 4 large subunits of the cytochrome b6-f complex are cytochrome b6, subunit IV (17 kDa polypeptide, petD), cytochrome f and the Rieske protein, while the 4 small subunits are PetG, PetL, PetM and PetN. The complex functions as a dimer. It depends on heme as a cofactor.

It is found in the plastid. It localises to the chloroplast thylakoid membrane. Its function is as follows. Component of the cytochrome b6-f complex, which mediates electron transfer between photosystem II (PSII) and photosystem I (PSI), cyclic electron flow around PSI, and state transitions. The sequence is that of Cytochrome f from Platanus occidentalis (Sycamore).